Reading from the N-terminus, the 112-residue chain is UPF0145 protein MmarC6_1828 (112 aa).

The protein belongs to the UPF0145 family.

This chain is UPF0145 protein MmarC6_1828, found in Methanococcus maripaludis (strain C6 / ATCC BAA-1332).